The chain runs to 518 residues: Cyclin-L2 (518 aa).

2 cyclin-like regions span residues 81 to 183 (ELIQ…RVLK) and 196 to 280 (KIIV…KILQ). Residues 310-518 (AKGLLPGTAP…DHPGHSRHRR (209 aa)) are disordered. 5 positions are modified to phosphoserine: serine 328, serine 335, serine 345, serine 348, and serine 366. Residues 382–420 (RSREQSYSRSPSRSASPKRRKSDSGSTSGGSKSQSRSRS) are RS. The segment covering 405-427 (SGSTSGGSKSQSRSRSRSDSPPR) has biased composition (low complexity). The segment covering 438-450 (SEVRGSRKSKDCK) has biased composition (basic and acidic residues). Residues 455 to 469 (KPHKSRSRSSSRSRS) show a composition bias toward basic residues. 2 stretches are compositionally biased toward basic and acidic residues: residues 470-479 (RSRERTDNSG) and 487-512 (YYRD…DHPG).

The protein belongs to the cyclin family. Cyclin L subfamily. In terms of assembly, interacts with CDK11A, CDK11B, CDK12, CDK13 and POLR2A, the hyperphosphorylated C-terminal domain (CTD) of RNA polymerase II. May form a ternary complex with CDK11B and casein kinase II (CKII). Interacts with pre-mRNA-splicing factors, including at least SRSF1, SRSF2 and SRSF7/SLU7. As to expression, widely expressed (at protein level).

It is found in the nucleus speckle. It localises to the nucleus. The protein localises to the nucleoplasm. Involved in pre-mRNA splicing. May induce cell death, possibly by acting on the transcription and RNA processing of apoptosis-related factors. The polypeptide is Cyclin-L2 (Ccnl2) (Mus musculus (Mouse)).